Here is a 259-residue protein sequence, read N- to C-terminus: MLMVISPAKTLDYETPPATQRFTQPQYLDHSQELIQQLRELSPAQISELMHVSDKIGGLNAARFGSWTPAFTPENAKQALLAFKGDVYTGLDAQSFSEANFDYAQKHLRMLSGLYGLLRPLDLMQPYRLEMGTKLANARGKDLYAFWGTRISEWLNEALADQGDDVLLNLASNEYFSAVKRTALNARIINTEFKDQKNGQYKIISFYAKKARGLMSRFVIQEKINDPALLKQFDVQGYRYSAEQSKPDNLVFLRDHAPE.

This sequence belongs to the UPF0246 family.

This Pseudomonas fluorescens (strain Pf0-1) protein is UPF0246 protein Pfl01_0961.